The sequence spans 428 residues: Ectonucleoside triphosphate diphosphohydrolase 5 (428 aa).

An N-terminal signal peptide occupies residues 1–24; that stretch reads MTSSRLPVLLALVFSSLSPVLSHS. Glu172 acts as the Proton acceptor in catalysis. N-linked (GlcNAc...) asparagine glycosylation is present at Asn232. Intrachain disulfides connect Cys272/Cys303 and Cys363/Cys377.

This sequence belongs to the GDA1/CD39 NTPase family. Monomer; active form. Homodimer; disulfide-linked. Homodimers are enzymatically inactive. Ca(2+) is required as a cofactor. It depends on Mg(2+) as a cofactor.

It localises to the endoplasmic reticulum. It is found in the secreted. It carries out the reaction a ribonucleoside 5'-diphosphate + H2O = a ribonucleoside 5'-phosphate + phosphate + H(+). The enzyme catalyses GDP + H2O = GMP + phosphate + H(+). It catalyses the reaction UDP + H2O = UMP + phosphate + H(+). The catalysed reaction is IDP + H2O = IMP + phosphate + H(+). It carries out the reaction CDP + H2O = CMP + phosphate + H(+). The enzyme catalyses ADP + H2O = AMP + phosphate + H(+). It participates in protein modification; protein glycosylation. Its function is as follows. Hydrolyzes nucleoside diphosphates with a preference for GDP, IDP and UDP compared to ADP and CDP. In the lumen of the endoplasmic reticulum, hydrolyzes UDP that acts as an end-product feedback inhibitor of the UDP-Glc:glycoprotein glucosyltransferases. UMP can be transported back by an UDP-sugar antiporter to the cytosol where it is consumed to regenerate UDP-glucose. Therefore, it positively regulates protein reglucosylation by clearing UDP from the ER lumen and by promoting the regeneration of UDP-glucose. Protein reglucosylation is essential to proper glycoprotein folding and quality control in the ER. The protein is Ectonucleoside triphosphate diphosphohydrolase 5 (ENTPD5) of Gallus gallus (Chicken).